A 238-amino-acid polypeptide reads, in one-letter code: Fibroblast growth factor-binding protein 1 (238 aa).

An N-terminal signal peptide occupies residues 1–20 (MRIHGLILLSFLLLAAQVLS). Residues 25–61 (KTAKNVPDSTTEEDMSPSLGKARNKQRSRTSKSMTHG) are disordered. 3 disulfide bridges follow: Cys-71-Cys-88, Cys-97-Cys-130, and Cys-106-Cys-142. An O-linked (GalNAc...) serine glycan is attached at Ser-164. Residues 197–238 (KDSECLEDPDVLTQRKTALEFCGESWSSFCTFFLNMLQATSC) are sufficient for interaction with FGF2 and FGF2-induced effects. Intrachain disulfides connect Cys-201-Cys-238 and Cys-218-Cys-226.

This sequence belongs to the fibroblast growth factor-binding protein family. In terms of assembly, found in a complex with FGFBP1, FGF1 and FGF2. Interacts with FGF1, FGF2, FGF7, FGF10, FGF22 and HSPG2. As to expression, expressed in gut, eye, thymus, skin, lung, tongue, Purkinje cells and cerebral chorioid plexus (at protein level).

The protein resides in the secreted. It is found in the extracellular space. The protein localises to the cell membrane. Its function is as follows. Acts as a carrier protein that release fibroblast-binding factors (FGFs) from the extracellular matrix (EM) storage and thus enhance the mitogenic activity of FGFs. Enhances FGF2 signaling during tissue repair, angiogenesis and in tumor growth. This is Fibroblast growth factor-binding protein 1 (Fgfbp1) from Rattus norvegicus (Rat).